Here is a 572-residue protein sequence, read N- to C-terminus: Urocanate hydratase (572 aa).

NAD(+) contacts are provided by residues 48–49, Q126, 172–174, D192, 238–239, 259–263, 268–269, and Y317; these read GG, GMG, NA, QTSAH, and YL. C405 is an active-site residue. G487 contributes to the NAD(+) binding site. Residues 550 to 559 show a composition bias toward basic and acidic residues; it reads EGDEAHEGDA. The tract at residues 550 to 572 is disordered; sequence EGDEAHEGDAAHGSGAAREGDGV.

This sequence belongs to the urocanase family. It depends on NAD(+) as a cofactor.

It is found in the cytoplasm. The catalysed reaction is 4-imidazolone-5-propanoate = trans-urocanate + H2O. Its pathway is amino-acid degradation; L-histidine degradation into L-glutamate; N-formimidoyl-L-glutamate from L-histidine: step 2/3. Catalyzes the conversion of urocanate to 4-imidazolone-5-propionate. This Streptomyces coelicolor (strain ATCC BAA-471 / A3(2) / M145) protein is Urocanate hydratase.